A 232-amino-acid chain; its full sequence is Ribose-5-phosphate isomerase A (232 aa).

Substrate-binding positions include T28–T31, D83–D86, and K96–G99. E105 (proton acceptor) is an active-site residue. Residue K123 coordinates substrate.

The protein belongs to the ribose 5-phosphate isomerase family. In terms of assembly, homodimer.

The enzyme catalyses aldehydo-D-ribose 5-phosphate = D-ribulose 5-phosphate. The protein operates within carbohydrate degradation; pentose phosphate pathway; D-ribose 5-phosphate from D-ribulose 5-phosphate (non-oxidative stage): step 1/1. Its function is as follows. Catalyzes the reversible conversion of ribose-5-phosphate to ribulose 5-phosphate. This chain is Ribose-5-phosphate isomerase A, found in Rhizobium etli (strain CIAT 652).